The following is a 383-amino-acid chain: Queuine tRNA-ribosyltransferase (383 aa).

D92 acts as the Proton acceptor in catalysis. Substrate contacts are provided by residues 92–96 (DSGGF), D146, Q190, and G217. The RNA binding stretch occupies residues 248 to 254 (GVGKPED). D267 functions as the Nucleophile in the catalytic mechanism. The interval 272–276 (TRNAR) is RNA binding; important for wobble base 34 recognition. Residues C310, C312, C315, and H341 each contribute to the Zn(2+) site.

The protein belongs to the queuine tRNA-ribosyltransferase family. As to quaternary structure, homodimer. Within each dimer, one monomer is responsible for RNA recognition and catalysis, while the other monomer binds to the replacement base PreQ1. Requires Zn(2+) as cofactor.

The enzyme catalyses 7-aminomethyl-7-carbaguanine + guanosine(34) in tRNA = 7-aminomethyl-7-carbaguanosine(34) in tRNA + guanine. Its pathway is tRNA modification; tRNA-queuosine biosynthesis. Its function is as follows. Catalyzes the base-exchange of a guanine (G) residue with the queuine precursor 7-aminomethyl-7-deazaguanine (PreQ1) at position 34 (anticodon wobble position) in tRNAs with GU(N) anticodons (tRNA-Asp, -Asn, -His and -Tyr). Catalysis occurs through a double-displacement mechanism. The nucleophile active site attacks the C1' of nucleotide 34 to detach the guanine base from the RNA, forming a covalent enzyme-RNA intermediate. The proton acceptor active site deprotonates the incoming PreQ1, allowing a nucleophilic attack on the C1' of the ribose to form the product. After dissociation, two additional enzymatic reactions on the tRNA convert PreQ1 to queuine (Q), resulting in the hypermodified nucleoside queuosine (7-(((4,5-cis-dihydroxy-2-cyclopenten-1-yl)amino)methyl)-7-deazaguanosine). The protein is Queuine tRNA-ribosyltransferase of Psychrobacter cryohalolentis (strain ATCC BAA-1226 / DSM 17306 / VKM B-2378 / K5).